Reading from the N-terminus, the 228-residue chain is MTARRAPAVNRDVLEQMLVDGTAALDIALTDAQRNQLLDYVALLGKWNAVYNLTAIRDPKQMLIQHILDSLSIVPHLRDRASARVLDVGSGGGLPGIVLAIVQPDWQVTLNDIVQKKSAFQTQMRAELKLANLSVVTGRVELLQPGVEVPEKFDMIVSRAFADLSDFVKLARHLVAPGGSIWAMKGVHPDDEIARLPEGSRVKQTMRLAVPMLDAERHLIEVVVDEAN.

Residues Gly-89, Leu-94, 140-141 (VE), and Arg-159 each bind S-adenosyl-L-methionine.

This sequence belongs to the methyltransferase superfamily. RNA methyltransferase RsmG family.

Its subcellular location is the cytoplasm. The enzyme catalyses guanosine(527) in 16S rRNA + S-adenosyl-L-methionine = N(7)-methylguanosine(527) in 16S rRNA + S-adenosyl-L-homocysteine. Functionally, specifically methylates the N7 position of guanine in position 527 of 16S rRNA. In Burkholderia ambifaria (strain MC40-6), this protein is Ribosomal RNA small subunit methyltransferase G.